Reading from the N-terminus, the 336-residue chain is UDP-3-O-acylglucosamine N-acyltransferase (336 aa).

Residue His236 is the Proton acceptor of the active site.

This sequence belongs to the transferase hexapeptide repeat family. LpxD subfamily. As to quaternary structure, homotrimer.

The enzyme catalyses a UDP-3-O-[(3R)-3-hydroxyacyl]-alpha-D-glucosamine + a (3R)-hydroxyacyl-[ACP] = a UDP-2-N,3-O-bis[(3R)-3-hydroxyacyl]-alpha-D-glucosamine + holo-[ACP] + H(+). The protein operates within bacterial outer membrane biogenesis; LPS lipid A biosynthesis. Catalyzes the N-acylation of UDP-3-O-acylglucosamine using 3-hydroxyacyl-ACP as the acyl donor. Is involved in the biosynthesis of lipid A, a phosphorylated glycolipid that anchors the lipopolysaccharide to the outer membrane of the cell. The protein is UDP-3-O-acylglucosamine N-acyltransferase of Aromatoleum aromaticum (strain DSM 19018 / LMG 30748 / EbN1) (Azoarcus sp. (strain EbN1)).